A 229-amino-acid polypeptide reads, in one-letter code: UPF0173 metal-dependent hydrolase SAB1566c (229 aa).

Belongs to the UPF0173 family.

The sequence is that of UPF0173 metal-dependent hydrolase SAB1566c from Staphylococcus aureus (strain bovine RF122 / ET3-1).